The following is a 127-amino-acid chain: Anti-adapter protein IraD (127 aa).

Belongs to the GpW/Gp25 family. IraD subfamily. As to quaternary structure, interacts with RssB.

Its subcellular location is the cytoplasm. Its function is as follows. Inhibits RpoS proteolysis by regulating RssB activity, thereby increasing the stability of the sigma stress factor RpoS during oxidative stress. Its effect on RpoS stability is due to its interaction with RssB, which probably blocks the interaction of RssB with RpoS, and the consequent delivery of the RssB-RpoS complex to the ClpXP protein degradation pathway. The chain is Anti-adapter protein IraD from Escherichia coli (strain UTI89 / UPEC).